Consider the following 105-residue polypeptide: Met repressor (105 aa).

This sequence belongs to the MetJ family. As to quaternary structure, homodimer.

The protein resides in the cytoplasm. In terms of biological role, this regulatory protein, when combined with SAM (S-adenosylmethionine) represses the expression of the methionine regulon and of enzymes involved in SAM synthesis. In Haemophilus influenzae (strain PittEE), this protein is Met repressor.